A 99-amino-acid polypeptide reads, in one-letter code: MTIQIKTTLTFDSWLSKLKNLRAKAKINARIKRLQFGNFGDIKSVNDGIFELRIDEGQGYRVYLKNQNGVLVILLCGGDKSTQDKDIKQAKLLAQELGL.

This is an uncharacterized protein from Haemophilus influenzae (strain ATCC 51907 / DSM 11121 / KW20 / Rd).